The chain runs to 296 residues: Protoheme IX farnesyltransferase (296 aa).

At 1–9 (MIFKQYLQV) the chain is on the cytoplasmic side. Residues 10 to 28 (TKPGIIFGNLISVIGGFLL) traverse the membrane as a helical segment. Over 29-37 (ASKGSIDYP) the chain is Periplasmic. A helical membrane pass occupies residues 38–56 (LFIYTLVGVSLVVASGCVF). At 57–78 (NNYIDRDIDRKMERTKNRVLVK) the chain is on the cytoplasmic side. The chain crosses the membrane as a helical span at residues 79-97 (GLISPAVSLVYATLLGIAG). The Periplasmic portion of the chain corresponds to 98-107 (FMLLWFGANP). The helical transmembrane segment at 108–126 (LACWLGVMGFVVYVGVYSL) threads the bilayer. Residues 127–197 (YMKRHSVYGT…YQAANIPVLP (71 aa)) lie on the Cytoplasmic side of the membrane. A helical transmembrane segment spans residues 198-216 (VVKGISVAKNHITLYIIAF). Topologically, residues 217–228 (AVATLMLSLGGY) are periplasmic. A helical transmembrane segment spans residues 229 to 247 (AGYKYLVVAAAVSVWWLGM). The Cytoplasmic segment spans residues 248 to 268 (ALRGYKVADDRIWARKLFGFS). A helical transmembrane segment spans residues 269–287 (IIAITALSVMMSVDFMVPD). Residues 288-296 (SHTLLAAVW) lie on the Periplasmic side of the membrane.

It belongs to the UbiA prenyltransferase family. Protoheme IX farnesyltransferase subfamily.

The protein localises to the cell inner membrane. The catalysed reaction is heme b + (2E,6E)-farnesyl diphosphate + H2O = Fe(II)-heme o + diphosphate. Its pathway is porphyrin-containing compound metabolism; heme O biosynthesis; heme O from protoheme: step 1/1. Its function is as follows. Converts heme B (protoheme IX) to heme O by substitution of the vinyl group on carbon 2 of heme B porphyrin ring with a hydroxyethyl farnesyl side group. In Escherichia coli O1:K1 / APEC, this protein is Protoheme IX farnesyltransferase.